Consider the following 332-residue polypeptide: Holliday junction branch migration complex subunit RuvB (332 aa).

The segment at 1 to 181 is large ATPase domain (RuvB-L); sequence MSRILDNEMM…FGITGHMEYY (181 aa). Residues Leu-20, Arg-21, Gly-62, Lys-65, Thr-66, Thr-67, 128-130, Arg-171, Tyr-181, and Arg-218 contribute to the ATP site; that span reads EDF. Residue Thr-66 coordinates Mg(2+). The tract at residues 182–252 is small ATPAse domain (RuvB-S); the sequence is AHADLTEIVE…ITDKALTMLD (71 aa). The head domain (RuvB-H) stretch occupies residues 255 to 332; the sequence is HEGLDYVDQK…EHLGYEYSEK (78 aa). Arg-291, Arg-310, Arg-312, and Arg-315 together coordinate DNA.

Belongs to the RuvB family. In terms of assembly, homohexamer. Forms an RuvA(8)-RuvB(12)-Holliday junction (HJ) complex. HJ DNA is sandwiched between 2 RuvA tetramers; dsDNA enters through RuvA and exits via RuvB. An RuvB hexamer assembles on each DNA strand where it exits the tetramer. Each RuvB hexamer is contacted by two RuvA subunits (via domain III) on 2 adjacent RuvB subunits; this complex drives branch migration. In the full resolvosome a probable DNA-RuvA(4)-RuvB(12)-RuvC(2) complex forms which resolves the HJ.

The protein resides in the cytoplasm. It catalyses the reaction ATP + H2O = ADP + phosphate + H(+). In terms of biological role, the RuvA-RuvB-RuvC complex processes Holliday junction (HJ) DNA during genetic recombination and DNA repair, while the RuvA-RuvB complex plays an important role in the rescue of blocked DNA replication forks via replication fork reversal (RFR). RuvA specifically binds to HJ cruciform DNA, conferring on it an open structure. The RuvB hexamer acts as an ATP-dependent pump, pulling dsDNA into and through the RuvAB complex. RuvB forms 2 homohexamers on either side of HJ DNA bound by 1 or 2 RuvA tetramers; 4 subunits per hexamer contact DNA at a time. Coordinated motions by a converter formed by DNA-disengaged RuvB subunits stimulates ATP hydrolysis and nucleotide exchange. Immobilization of the converter enables RuvB to convert the ATP-contained energy into a lever motion, pulling 2 nucleotides of DNA out of the RuvA tetramer per ATP hydrolyzed, thus driving DNA branch migration. The RuvB motors rotate together with the DNA substrate, which together with the progressing nucleotide cycle form the mechanistic basis for DNA recombination by continuous HJ branch migration. Branch migration allows RuvC to scan DNA until it finds its consensus sequence, where it cleaves and resolves cruciform DNA. This Streptococcus pneumoniae serotype 4 (strain ATCC BAA-334 / TIGR4) protein is Holliday junction branch migration complex subunit RuvB.